We begin with the raw amino-acid sequence, 90 residues long: DNA/RNA-binding protein Alba (90 aa).

The residue at position 11 (Lys11) is an N6-acetyllysine.

This sequence belongs to the histone-like Alba family. Post-translationally, acetylated. Acetylation at Lys-11 decreases DNA-binding affinity.

The protein resides in the cytoplasm. It localises to the chromosome. In terms of biological role, binds double-stranded DNA tightly but without sequence specificity. Involved in DNA compaction. This Picrophilus torridus (strain ATCC 700027 / DSM 9790 / JCM 10055 / NBRC 100828 / KAW 2/3) protein is DNA/RNA-binding protein Alba.